A 439-amino-acid polypeptide reads, in one-letter code: Ribosomal protein uS12 methylthiotransferase RimO (439 aa).

The region spanning 6 to 116 (GKVGFVSLGC…VMNQVHQVAP (111 aa)) is the MTTase N-terminal domain. Positions 15, 51, 80, 148, 152, and 155 each coordinate [4Fe-4S] cluster. The Radical SAM core domain occupies 134–371 (LTPKHYAYLK…MEVQQRISAS (238 aa)). Residues 374 to 439 (QAKIGKRMDV…DEYDLWGRPV (66 aa)) form the TRAM domain.

This sequence belongs to the methylthiotransferase family. RimO subfamily. [4Fe-4S] cluster is required as a cofactor.

Its subcellular location is the cytoplasm. It carries out the reaction L-aspartate(89)-[ribosomal protein uS12]-hydrogen + (sulfur carrier)-SH + AH2 + 2 S-adenosyl-L-methionine = 3-methylsulfanyl-L-aspartate(89)-[ribosomal protein uS12]-hydrogen + (sulfur carrier)-H + 5'-deoxyadenosine + L-methionine + A + S-adenosyl-L-homocysteine + 2 H(+). In terms of biological role, catalyzes the methylthiolation of an aspartic acid residue of ribosomal protein uS12. This Hahella chejuensis (strain KCTC 2396) protein is Ribosomal protein uS12 methylthiotransferase RimO.